Here is a 481-residue protein sequence, read N- to C-terminus: Aspartyl/glutamyl-tRNA(Asn/Gln) amidotransferase subunit B (481 aa).

Belongs to the GatB/GatE family. GatB subfamily. In terms of assembly, heterotrimer of A, B and C subunits.

It carries out the reaction L-glutamyl-tRNA(Gln) + L-glutamine + ATP + H2O = L-glutaminyl-tRNA(Gln) + L-glutamate + ADP + phosphate + H(+). The catalysed reaction is L-aspartyl-tRNA(Asn) + L-glutamine + ATP + H2O = L-asparaginyl-tRNA(Asn) + L-glutamate + ADP + phosphate + 2 H(+). Functionally, allows the formation of correctly charged Asn-tRNA(Asn) or Gln-tRNA(Gln) through the transamidation of misacylated Asp-tRNA(Asn) or Glu-tRNA(Gln) in organisms which lack either or both of asparaginyl-tRNA or glutaminyl-tRNA synthetases. The reaction takes place in the presence of glutamine and ATP through an activated phospho-Asp-tRNA(Asn) or phospho-Glu-tRNA(Gln). The chain is Aspartyl/glutamyl-tRNA(Asn/Gln) amidotransferase subunit B from Ehrlichia ruminantium (strain Gardel).